A 266-amino-acid chain; its full sequence is Signal peptidase I (266 aa).

Residues 1 to 20 (MQTDNTKSNTNKTAKQEWWS) are Cytoplasmic-facing. Residues 21–41 (CAFVICIALLIRILIMEPFTV) traverse the membrane as a helical segment. The Periplasmic portion of the chain corresponds to 42–266 (PTGSMKATIL…IFRNLYNTDE (225 aa)). Catalysis depends on residues S45 and K108.

Belongs to the peptidase S26 family.

It localises to the cell inner membrane. The catalysed reaction is Cleavage of hydrophobic, N-terminal signal or leader sequences from secreted and periplasmic proteins.. This Rickettsia akari (strain Hartford) protein is Signal peptidase I (lepB).